Consider the following 151-residue polypeptide: MARINYSINADPENTSKAMGSELHISPKKSREVCCKIKGMKASEARKFLEDVIAMKQAVPFKRHSEGAGHRKGPMAGGRYPVSASKEILKVLKNAESNAEYKGLEPANMYIIHAAIQRGRVIHGFMPRARGRASPKDTETVNIEMILSEVR.

Residues 1–18 (MARINYSINADPENTSKA) are compositionally biased toward polar residues. The disordered stretch occupies residues 1-23 (MARINYSINADPENTSKAMGSEL).

It belongs to the universal ribosomal protein uL22 family. In terms of assembly, part of the 50S ribosomal subunit.

Functionally, this protein binds specifically to 23S rRNA. It makes multiple contacts with different domains of the 23S rRNA in the assembled 50S subunit and ribosome. Its function is as follows. The globular domain of the protein is located near the polypeptide exit tunnel on the outside of the subunit, while an extended beta-hairpin is found that lines the wall of the exit tunnel in the center of the 70S ribosome. The protein is Large ribosomal subunit protein uL22 of Methanosarcina mazei (strain ATCC BAA-159 / DSM 3647 / Goe1 / Go1 / JCM 11833 / OCM 88) (Methanosarcina frisia).